The primary structure comprises 187 residues: Probable nicotinate-nucleotide adenylyltransferase (187 aa).

The protein belongs to the NadD family.

It carries out the reaction nicotinate beta-D-ribonucleotide + ATP + H(+) = deamido-NAD(+) + diphosphate. The protein operates within cofactor biosynthesis; NAD(+) biosynthesis; deamido-NAD(+) from nicotinate D-ribonucleotide: step 1/1. Functionally, catalyzes the reversible adenylation of nicotinate mononucleotide (NaMN) to nicotinic acid adenine dinucleotide (NaAD). The polypeptide is Probable nicotinate-nucleotide adenylyltransferase (Anaeromyxobacter dehalogenans (strain 2CP-1 / ATCC BAA-258)).